Reading from the N-terminus, the 249-residue chain is Long form salivary protein D7L (249 aa).

The first 19 residues, 1–19, serve as a signal peptide directing secretion; it reads MNAVITSLVFISLVGVGYS. Cystine bridges form between Cys36-Cys66 and Cys62-Cys112. Residue Trp49 coordinates thromboxane A2. Trp52 is a binding site for leukotriene C4. Tyr63 serves as a coordination point for thromboxane A2. Leukotriene C4-binding residues include Gly136 and Lys154. Lys154 contacts thromboxane A2. Disulfide bonds link Cys162/Cys178, Cys174/Cys221, and Cys211/Cys230.

Belongs to the PBP/GOBP family.

It localises to the secreted. Modulates blood feeding of female sandflies on vertebrate species by binding and sequestering different mediators involved in the host response. Binds leukotriene C4, leukotriene D4, leukotriene E4 and U-46619, a stable analog of thromboxane A2. Does not bind histamine or serotonin. Inhibits platelet aggregation induced by low concentrations of collagen in thromboxane A2-dependent manner. This is Long form salivary protein D7L from Phlebotomus duboscqi (Sandfly).